A 716-amino-acid polypeptide reads, in one-letter code: Amino-acid acetyltransferase, mitochondrial (716 aa).

A mitochondrion-targeting transit peptide spans 1–44; it reads MSPHTGWPRTVNSSLLKKHRSSLCTCQHTSSFLPRSFSTTADRH. 2 disordered regions span residues 99-119 and 487-508; these read YPKS…APTL and LSSS…TVYP. Positions 102–112 are enriched in basic and acidic residues; the sequence is SPDENKPEPEK. Polar residues predominate over residues 497–508; sequence GPTNNGQGTVYP. Residues 537-706 form the N-acetyltransferase domain; it reads SRPRLKLDDP…YEAVCRSTQP (170 aa).

Belongs to the acetyltransferase family.

The protein resides in the mitochondrion. It catalyses the reaction L-glutamate + acetyl-CoA = N-acetyl-L-glutamate + CoA + H(+). It functions in the pathway amino-acid biosynthesis; L-arginine biosynthesis; N(2)-acetyl-L-ornithine from L-glutamate: step 1/4. Functionally, N-acetylglutamate synthase involved in arginine biosynthesis. The chain is Amino-acid acetyltransferase, mitochondrial (arg2) from Neosartorya fischeri (strain ATCC 1020 / DSM 3700 / CBS 544.65 / FGSC A1164 / JCM 1740 / NRRL 181 / WB 181) (Aspergillus fischerianus).